The primary structure comprises 401 residues: uncharacterized protein (401 aa).

Helical transmembrane passes span 20–40, 49–69, 83–100, 104–121, 140–160, 167–187, 207–227, 248–268, 289–309, and 357–377; these read FFGE…MVLY, IMMP…LTLA, ILTA…FVFA, YVFA…SLYI, VFAV…LVGM, PVWI…IAAL, FTIY…SMLY, MLTI…VPLV, LAAA…TAAV, and GLIL…VCLL.

This sequence belongs to the major facilitator superfamily.

The protein resides in the cell membrane. This is an uncharacterized protein from Bacillus subtilis (strain 168).